We begin with the raw amino-acid sequence, 268 residues long: Tryptophan synthase alpha chain (268 aa).

Residues Glu49 and Asp60 each act as proton acceptor in the active site.

It belongs to the TrpA family. Tetramer of two alpha and two beta chains.

The catalysed reaction is (1S,2R)-1-C-(indol-3-yl)glycerol 3-phosphate + L-serine = D-glyceraldehyde 3-phosphate + L-tryptophan + H2O. The protein operates within amino-acid biosynthesis; L-tryptophan biosynthesis; L-tryptophan from chorismate: step 5/5. Its function is as follows. The alpha subunit is responsible for the aldol cleavage of indoleglycerol phosphate to indole and glyceraldehyde 3-phosphate. This chain is Tryptophan synthase alpha chain, found in Pseudomonas paraeruginosa (strain DSM 24068 / PA7) (Pseudomonas aeruginosa (strain PA7)).